We begin with the raw amino-acid sequence, 475 residues long: Ribulose bisphosphate carboxylase large chain (475 aa).

The propeptide occupies 1–2; sequence MS. The residue at position 3 (Pro3) is an N-acetylproline. The residue at position 14 (Lys14) is an N6,N6,N6-trimethyllysine. Substrate contacts are provided by Asn123 and Thr173. Residue Lys175 is the Proton acceptor of the active site. Lys177 serves as a coordination point for substrate. Mg(2+) contacts are provided by Lys201, Asp203, and Glu204. N6-carboxylysine is present on Lys201. His294 serves as the catalytic Proton acceptor. Substrate contacts are provided by Arg295, His327, and Ser379.

Belongs to the RuBisCO large chain family. Type I subfamily. Heterohexadecamer of 8 large chains and 8 small chains; disulfide-linked. The disulfide link is formed within the large subunit homodimers. Mg(2+) is required as a cofactor. The disulfide bond which can form in the large chain dimeric partners within the hexadecamer appears to be associated with oxidative stress and protein turnover.

Its subcellular location is the plastid. The protein resides in the chloroplast. The catalysed reaction is 2 (2R)-3-phosphoglycerate + 2 H(+) = D-ribulose 1,5-bisphosphate + CO2 + H2O. It catalyses the reaction D-ribulose 1,5-bisphosphate + O2 = 2-phosphoglycolate + (2R)-3-phosphoglycerate + 2 H(+). Functionally, ruBisCO catalyzes two reactions: the carboxylation of D-ribulose 1,5-bisphosphate, the primary event in carbon dioxide fixation, as well as the oxidative fragmentation of the pentose substrate in the photorespiration process. Both reactions occur simultaneously and in competition at the same active site. This is Ribulose bisphosphate carboxylase large chain from Buxus microphylla (Littleleaf boxwood).